The chain runs to 391 residues: Small ribosomal subunit protein bS1 (391 aa).

S1 motif domains follow at residues 16–90 (GDKV…LSRR), 108–173 (NEII…LSRK), 194–262 (GDVI…LSIK), and 279–348 (NDVI…LSIK).

This sequence belongs to the bacterial ribosomal protein bS1 family.

Functionally, binds mRNA; thus facilitating recognition of the initiation point. It is needed to translate mRNA with a short Shine-Dalgarno (SD) purine-rich sequence. In Staphylococcus aureus (strain MSSA476), this protein is Small ribosomal subunit protein bS1 (rpsA).